A 215-amino-acid polypeptide reads, in one-letter code: Adenylate kinase (215 aa).

An ATP-binding site is contributed by 10–15 (GAGKGT). The NMP stretch occupies residues 30–59 (STGDLLRAAVAAGTPLGKEAKAYMDRGELV). AMP contacts are provided by residues threonine 31, arginine 36, 57-59 (ELV), 85-88 (GFPR), and glutamine 92. An LID region spans residues 126 to 163 (GRRTCKSCGQMYNVYYSPSKVEGKCDKCGGELFQRDDD). Residue arginine 127 coordinates ATP. Residues cysteine 130, cysteine 133, cysteine 150, and cysteine 153 each coordinate Zn(2+). AMP is bound by residues arginine 160 and arginine 171. Glycine 199 is an ATP binding site.

Belongs to the adenylate kinase family. As to quaternary structure, monomer.

The protein resides in the cytoplasm. It catalyses the reaction AMP + ATP = 2 ADP. The protein operates within purine metabolism; AMP biosynthesis via salvage pathway; AMP from ADP: step 1/1. Functionally, catalyzes the reversible transfer of the terminal phosphate group between ATP and AMP. Plays an important role in cellular energy homeostasis and in adenine nucleotide metabolism. The chain is Adenylate kinase from Thermodesulfovibrio yellowstonii (strain ATCC 51303 / DSM 11347 / YP87).